We begin with the raw amino-acid sequence, 305 residues long: tRNA dimethylallyltransferase (305 aa).

9–16 is a binding site for ATP; the sequence is GPTASGKS. Substrate is bound at residue 11-16; it reads TASGKS. The tract at residues 34–37 is interaction with substrate tRNA; sequence DSKQ.

The protein belongs to the IPP transferase family. As to quaternary structure, monomer. It depends on Mg(2+) as a cofactor.

It catalyses the reaction adenosine(37) in tRNA + dimethylallyl diphosphate = N(6)-dimethylallyladenosine(37) in tRNA + diphosphate. Its function is as follows. Catalyzes the transfer of a dimethylallyl group onto the adenine at position 37 in tRNAs that read codons beginning with uridine, leading to the formation of N6-(dimethylallyl)adenosine (i(6)A). The polypeptide is tRNA dimethylallyltransferase (Anaplasma marginale (strain St. Maries)).